Consider the following 182-residue polypeptide: Transcription termination/antitermination protein NusG (182 aa).

Positions glycine 131–serine 161 constitute a KOW domain.

This sequence belongs to the NusG family.

Functionally, participates in transcription elongation, termination and antitermination. This is Transcription termination/antitermination protein NusG from Vibrio cholerae serotype O1 (strain ATCC 39315 / El Tor Inaba N16961).